Consider the following 333-residue polypeptide: Thiamine-monophosphate kinase (333 aa).

Residues aspartate 35, threonine 50, and aspartate 51 each contribute to the Mg(2+) site. Histidine 58 serves as a coordination point for substrate. A Mg(2+)-binding site is contributed by aspartate 80. ATP-binding positions include tyrosine 111, 128-129, and arginine 153; that span reads GD. Aspartate 129 is a Mg(2+) binding site. Residue aspartate 230 coordinates Mg(2+). Residue serine 232 participates in ATP binding. Aspartate 233 provides a ligand contact to Mg(2+). Substrate contacts are provided by glutamate 278 and phenylalanine 330.

The protein belongs to the thiamine-monophosphate kinase family.

It catalyses the reaction thiamine phosphate + ATP = thiamine diphosphate + ADP. The protein operates within cofactor biosynthesis; thiamine diphosphate biosynthesis; thiamine diphosphate from thiamine phosphate: step 1/1. Functionally, catalyzes the ATP-dependent phosphorylation of thiamine-monophosphate (TMP) to form thiamine-pyrophosphate (TPP), the active form of vitamin B1. This Prochlorococcus marinus (strain SARG / CCMP1375 / SS120) protein is Thiamine-monophosphate kinase.